The primary structure comprises 50 residues: uncharacterized protein (50 aa).

This is an uncharacterized protein from Bacillus subtilis (Bacteriophage phi-105).